Reading from the N-terminus, the 241-residue chain is Small ribosomal subunit protein bS6 (241 aa).

Over residues 97–108 (KPKIRERNRKYT) the composition is skewed to basic residues. Disordered stretches follow at residues 97 to 187 (KPKI…HREN) and 199 to 241 (NKNH…QSSN). A compositionally biased stretch (basic and acidic residues) spans 109-118 (PRRDRFDKPN). Composition is skewed to low complexity over residues 130-151 (QDQQ…QTSQ), 161-180 (DDFQ…QQNQ), and 199-210 (NKNHQNQTSQTQ).

The protein belongs to the bacterial ribosomal protein bS6 family.

Functionally, binds together with bS18 to 16S ribosomal RNA. This Mesomycoplasma hyopneumoniae (strain 7448) (Mycoplasma hyopneumoniae) protein is Small ribosomal subunit protein bS6.